Consider the following 248-residue polypeptide: MLYLHDVWVNWFEGEENGYNVCHFYEWRKDDTIELLDQVPLLKVDATLYHYIENELLELPQKLLEDVYHKAYIRKNHERLQQEYCFVVTDGKGIIAIDSIGYNVPIRKSRLIPRQEQMVYEMVENVQAEKYEFQVEEIEKEHHILSPSPFIMNGLTRKERQLKQLLFMALDQLHTTKNPAEIRYWFTEWDPSAYGMVQHMEFEDVWAKLYDEAKTGWSEKHEQLCERLVKGQPFFEKLWEMENEQKVN.

Belongs to the UPF0736 family.

The polypeptide is UPF0736 protein BcerKBAB4_1085 (Bacillus mycoides (strain KBAB4) (Bacillus weihenstephanensis)).